Consider the following 204-residue polypeptide: Large ribosomal subunit protein uL4 (204 aa).

A disordered region spans residues Ala-53 to Ala-73.

This sequence belongs to the universal ribosomal protein uL4 family. Part of the 50S ribosomal subunit.

Its function is as follows. One of the primary rRNA binding proteins, this protein initially binds near the 5'-end of the 23S rRNA. It is important during the early stages of 50S assembly. It makes multiple contacts with different domains of the 23S rRNA in the assembled 50S subunit and ribosome. In terms of biological role, forms part of the polypeptide exit tunnel. The polypeptide is Large ribosomal subunit protein uL4 (Campylobacter concisus (strain 13826)).